The sequence spans 347 residues: Probable E3 ubiquitin-protein ligase DTX3 (347 aa).

The disordered stretch occupies residues 111-157; that stretch reads GGEHPELHRPGPPPLRAAPLLPPGARGLPPPPPPLPPPLPPRLREDA. Over residues 120–151 the composition is skewed to pro residues; the sequence is PGPPPLRAAPLLPPGARGLPPPPPPLPPPLPP. The RING-type zinc finger occupies 164-205; it reads CPICLGEIQNAKTLEKCRHSFCEGCITRALQVKKACPMCGRF.

Belongs to the Deltex family. Homodimer. May form a heterodimer with other members of the Deltex family. Interacts with NOTCH1. As to expression, strongly expressed in testis and brain. Weakly expressed in kidney.

It localises to the cytoplasm. It catalyses the reaction S-ubiquitinyl-[E2 ubiquitin-conjugating enzyme]-L-cysteine + [acceptor protein]-L-lysine = [E2 ubiquitin-conjugating enzyme]-L-cysteine + N(6)-ubiquitinyl-[acceptor protein]-L-lysine.. Its pathway is protein modification; protein ubiquitination. Its function is as follows. Regulator of Notch signaling, a signaling pathway involved in cell-cell communications that regulates a broad spectrum of cell-fate determinations. Probably acts both as a positive and negative regulator of Notch, depending on the developmental and cell context. Functions as a ubiquitin ligase protein in vitro, suggesting that it may regulate the Notch pathway via some ubiquitin ligase activity. The chain is Probable E3 ubiquitin-protein ligase DTX3 (Dtx3) from Mus musculus (Mouse).